Reading from the N-terminus, the 391-residue chain is 3-ketoacyl-CoA thiolase (391 aa).

The Acyl-thioester intermediate role is filled by C95. Residues H347 and C377 each act as proton acceptor in the active site.

This sequence belongs to the thiolase-like superfamily. Thiolase family. Heterotetramer of two alpha chains (FadB) and two beta chains (FadA).

Its subcellular location is the cytoplasm. It catalyses the reaction an acyl-CoA + acetyl-CoA = a 3-oxoacyl-CoA + CoA. It functions in the pathway lipid metabolism; fatty acid beta-oxidation. Functionally, catalyzes the final step of fatty acid oxidation in which acetyl-CoA is released and the CoA ester of a fatty acid two carbons shorter is formed. This is 3-ketoacyl-CoA thiolase from Marinobacter nauticus (strain ATCC 700491 / DSM 11845 / VT8) (Marinobacter aquaeolei).